Consider the following 143-residue polypeptide: MTVKKIALVAHDRMKKELIEWIKKHQNLLKHHELYATGSTGQAIEKTLNVTVTKMESGPLGGDLQLGAKIVNKEIDILIFFWDPLEAQPHDPDVRALLRIAVVWNLPVACNASTADYLLTSPLFDSDYHPETPDYEAYRNRII.

The 143-residue stretch at 1-143 folds into the MGS-like domain; that stretch reads MTVKKIALVA…DYEAYRNRII (143 aa). Substrate is bound by residues His11, Lys15, 37–40, and 57–58; these read TGST and SG. The active-site Proton donor/acceptor is Asp63. His90 serves as a coordination point for substrate.

The protein belongs to the methylglyoxal synthase family.

The enzyme catalyses dihydroxyacetone phosphate = methylglyoxal + phosphate. Its function is as follows. Catalyzes the formation of methylglyoxal from dihydroxyacetone phosphate. The sequence is that of Methylglyoxal synthase from Coxiella burnetii (strain Dugway 5J108-111).